A 494-amino-acid polypeptide reads, in one-letter code: Aspartyl/glutamyl-tRNA(Asn/Gln) amidotransferase subunit B (494 aa).

It belongs to the GatB/GatE family. GatB subfamily. In terms of assembly, heterotrimer of A, B and C subunits.

It catalyses the reaction L-glutamyl-tRNA(Gln) + L-glutamine + ATP + H2O = L-glutaminyl-tRNA(Gln) + L-glutamate + ADP + phosphate + H(+). It carries out the reaction L-aspartyl-tRNA(Asn) + L-glutamine + ATP + H2O = L-asparaginyl-tRNA(Asn) + L-glutamate + ADP + phosphate + 2 H(+). Functionally, allows the formation of correctly charged Asn-tRNA(Asn) or Gln-tRNA(Gln) through the transamidation of misacylated Asp-tRNA(Asn) or Glu-tRNA(Gln) in organisms which lack either or both of asparaginyl-tRNA or glutaminyl-tRNA synthetases. The reaction takes place in the presence of glutamine and ATP through an activated phospho-Asp-tRNA(Asn) or phospho-Glu-tRNA(Gln). The protein is Aspartyl/glutamyl-tRNA(Asn/Gln) amidotransferase subunit B of Rhizorhabdus wittichii (strain DSM 6014 / CCUG 31198 / JCM 15750 / NBRC 105917 / EY 4224 / RW1) (Sphingomonas wittichii).